A 540-amino-acid polypeptide reads, in one-letter code: Glucose-6-phosphate isomerase (540 aa).

Residue E350 is the Proton donor of the active site. Active-site residues include H381 and K503.

The protein belongs to the GPI family.

It is found in the cytoplasm. It catalyses the reaction alpha-D-glucose 6-phosphate = beta-D-fructose 6-phosphate. It functions in the pathway carbohydrate biosynthesis; gluconeogenesis. It participates in carbohydrate degradation; glycolysis; D-glyceraldehyde 3-phosphate and glycerone phosphate from D-glucose: step 2/4. Catalyzes the reversible isomerization of glucose-6-phosphate to fructose-6-phosphate. This is Glucose-6-phosphate isomerase from Burkholderia mallei (strain NCTC 10247).